The following is a 461-amino-acid chain: uncharacterized protein (461 aa).

13 consecutive transmembrane segments (helical) span residues 13–33 (GIIFILDIVLFFVLLNVLPFE), 54–74 (ALHVTITALLVPLLAVALGLV), 81–101 (VGFADPTIFLFFGGFSLATAL), 120–140 (GNLFIAVIYLFLITAFLSMWM), 170–190 (VFVLLGIAYSASIGGMGTLVG), 211–231 (YGLPIMIILLPLMIGILYIIF), 256–276 (FIIFPVIALTWIFSGKINPFI), 286–306 (IASFDSIVALLAAIVICSTGV), 314–334 (SNTDWGVLMLFGGGLTLSAVL), 349–369 (FMIDGQHFYLIGLLVAAFIIF), 377–397 (TASAALLVPIFISIAQSLGMP), 399–419 (IGLALIIGIGASCAFMLPVAT), and 439–459 (VGFLLNLVCVVVIATMGYMFW).

The protein belongs to the SLC13A/DASS transporter (TC 2.A.47) family. NADC subfamily.

The protein localises to the cell membrane. This is an uncharacterized protein from Haemophilus influenzae (strain ATCC 51907 / DSM 11121 / KW20 / Rd).